A 212-amino-acid chain; its full sequence is Tubulin alpha chain (212 aa).

Residues N3 and N25 each coordinate GTP. E51 is an active-site residue.

Belongs to the tubulin family. Dimer of alpha and beta chains. A typical microtubule is a hollow water-filled tube with an outer diameter of 25 nm and an inner diameter of 15 nM. Alpha-beta heterodimers associate head-to-tail to form protofilaments running lengthwise along the microtubule wall with the beta-tubulin subunit facing the microtubule plus end conferring a structural polarity. Microtubules usually have 13 protofilaments but different protofilament numbers can be found in some organisms and specialized cells. The cofactor is Mg(2+).

It localises to the cytoplasm. It is found in the cytoskeleton. It carries out the reaction GTP + H2O = GDP + phosphate + H(+). Tubulin is the major constituent of microtubules, a cylinder consisting of laterally associated linear protofilaments composed of alpha- and beta-tubulin heterodimers. Microtubules grow by the addition of GTP-tubulin dimers to the microtubule end, where a stabilizing cap forms. Below the cap, tubulin dimers are in GDP-bound state, owing to GTPase activity of alpha-tubulin. The protein is Tubulin alpha chain (TUB-A) of Pneumocystis carinii.